Here is a 119-residue protein sequence, read N- to C-terminus: Large ribosomal subunit protein bL20 (119 aa).

It belongs to the bacterial ribosomal protein bL20 family.

Functionally, binds directly to 23S ribosomal RNA and is necessary for the in vitro assembly process of the 50S ribosomal subunit. It is not involved in the protein synthesizing functions of that subunit. The chain is Large ribosomal subunit protein bL20 from Methylocella silvestris (strain DSM 15510 / CIP 108128 / LMG 27833 / NCIMB 13906 / BL2).